Reading from the N-terminus, the 264-residue chain is MAGEQKPSSNLLEQFILLAKGTSGSALTALISQVLEAPGVYVFGELLELANVQELAEGANAAYLQLLNLFAYGTYPDYIANKESLPELSTAQQNKLKHLTIVSLASRMKCIPYSVLLKDLEMRNLRELEDLIIEAVYTDIIQGKLDQRNQLLEVDFCIGRDIRKKDINNIVKTLHEWCDGCEAVLLGIEQQVLRANQYKENHSRTQQQVEAEVTNIKKTLKATASSSAQEMEQQLAERECPPHAEQRQPTKKMSKVKGLVSSRH.

Alanine 2 carries the post-translational modification N-acetylalanine. In terms of domain architecture, PCI spans 2–159 (AGEQKPSSNL…QLLEVDFCIG (158 aa)). Positions 194-237 (RANQYKENHSRTQQQVEAEVTNIKKTLKATASSSAQEMEQQLAE) form a coiled coil. Over residues 223–232 (TASSSAQEME) the composition is skewed to polar residues. A disordered region spans residues 223–264 (TASSSAQEMEQQLAERECPPHAEQRQPTKKMSKVKGLVSSRH). Positions 235 to 248 (LAERECPPHAEQRQ) are enriched in basic and acidic residues.

It belongs to the CSN7/EIF3M family. CSN7 subfamily. As to quaternary structure, component of the CSN complex, composed of COPS1/GPS1, COPS2, COPS3, COPS4, COPS5, COPS6, COPS7 (COPS7A or COPS7B), COPS8 and COPS9. In the complex, it probably interacts directly with COPS1, COPS2, COPS4, COPS5, COPS6 and COPS8. Interacts with EIF3S6.

It is found in the cytoplasm. The protein resides in the nucleus. Its function is as follows. Component of the COP9 signalosome complex (CSN), a complex involved in various cellular and developmental processes. The CSN complex is an essential regulator of the ubiquitin (Ubl) conjugation pathway by mediating the deneddylation of the cullin subunits of SCF-type E3 ligase complexes, leading to decrease the Ubl ligase activity of SCF-type complexes such as SCF, CSA or DDB2. The complex is also involved in phosphorylation of p53/TP53, JUN, I-kappa-B-alpha/NFKBIA, ITPK1 and IRF8/ICSBP, possibly via its association with CK2 and PKD kinases. CSN-dependent phosphorylation of TP53 and JUN promotes and protects degradation by the Ubl system, respectively. The protein is COP9 signalosome complex subunit 7b (COPS7B) of Bos taurus (Bovine).